The sequence spans 374 residues: Quinolinate synthase (374 aa).

2 residues coordinate iminosuccinate: H53 and S70. Position 116 (C116) interacts with [4Fe-4S] cluster. Iminosuccinate-binding positions include 148–150 (YMN) and S169. Position 236 (C236) interacts with [4Fe-4S] cluster. Iminosuccinate contacts are provided by residues 262 to 264 (HPE) and T279. A [4Fe-4S] cluster-binding site is contributed by C327.

It belongs to the quinolinate synthase family. Type 3 subfamily. Requires [4Fe-4S] cluster as cofactor.

The protein resides in the cytoplasm. It catalyses the reaction iminosuccinate + dihydroxyacetone phosphate = quinolinate + phosphate + 2 H2O + H(+). It participates in cofactor biosynthesis; NAD(+) biosynthesis; quinolinate from iminoaspartate: step 1/1. Its function is as follows. Catalyzes the condensation of iminoaspartate with dihydroxyacetone phosphate to form quinolinate. The protein is Quinolinate synthase of Haloarcula marismortui (strain ATCC 43049 / DSM 3752 / JCM 8966 / VKM B-1809) (Halobacterium marismortui).